We begin with the raw amino-acid sequence, 184 residues long: Photosystem I assembly protein Ycf4 (184 aa).

A run of 2 helical transmembrane segments spans residues 22 to 42 and 64 to 84; these read FCWA…GIPS and IVMC…WCTI.

It belongs to the Ycf4 family.

It localises to the plastid. It is found in the chloroplast thylakoid membrane. Functionally, seems to be required for the assembly of the photosystem I complex. The protein is Photosystem I assembly protein Ycf4 of Huperzia lucidula (Shining clubmoss).